The sequence spans 341 residues: Syntaxin-122 (341 aa).

Met1 is modified (N-acetylmethionine). 2 disordered regions span residues 1-22 (MNDLLSGSFKTSVADGSSPPHS) and 111-137 (LDRANEVNRSLPESGPGSSSDRQRTSV). At 1 to 284 (MNDLLSGSFK…ARFYQKNTRK (284 aa)) the chain is on the cytoplasmic side. Polar residues-rich tracts occupy residues 8–21 (SFKTSVADGSSPPH) and 126–137 (PGSSSDRQRTSV). Positions 64-185 (CHNLRSSNEQ…GEYPDEATLE (122 aa)) form a coiled coil. Residues 213–275 (INEIQERHDA…RSGADRLVKA (63 aa)) form the t-SNARE coiled-coil homology domain. Residues 285 to 305 (WTCFAILLLLIIVVLIVVFTV) form a helical; Anchor for type IV membrane protein membrane-spanning segment. The Vesicular portion of the chain corresponds to 306–341 (KPWESNGGGGGGAPRQATPVQAQPPPPPAVNRRLLR). The tract at residues 312 to 341 (GGGGGGAPRQATPVQAQPPPPPAVNRRLLR) is disordered.

The protein belongs to the syntaxin family. In terms of assembly, part of the t-SNARE complex.

Its subcellular location is the membrane. Vesicle trafficking protein that functions in the secretory pathway. The sequence is that of Syntaxin-122 (SYP122) from Arabidopsis thaliana (Mouse-ear cress).